Reading from the N-terminus, the 325-residue chain is MNSTSNSSLGNTFISKTLKEKSLTVQVLVGILLYVNGLMIFTFLKKETFRDTRYILFAQTLFVDSALMLFADLTLVGSAYELFIHIISCYIFCTVMALLSICSPVTLVAMCLERYVAICLPLRHASISSPKNTINGLLIIWGVSSVIPLFIFIVSFTYTPPNAMNSYVVCSNDVMFQVKWLAEMRALSQQLLFVIMLCIVGSTYIKIMVAAKSASAENKKSTYKGLRTVILHGLQLILGMMQLITPYIDILTLKVDIMLFINVKFSNFMLFWIFPRCLSPLVYGLRDKKFYNALKYYAFCGIYVCKKHKIKDSKTIRGAVSIAIY.

The Extracellular segment spans residues 1 to 22; it reads MNSTSNSSLGNTFISKTLKEKS. N2 and N6 each carry an N-linked (GlcNAc...) asparagine glycan. Residues 23–43 traverse the membrane as a helical segment; it reads LTVQVLVGILLYVNGLMIFTF. The Cytoplasmic portion of the chain corresponds to 44 to 54; sequence LKKETFRDTRY. A helical membrane pass occupies residues 55–75; sequence ILFAQTLFVDSALMLFADLTL. Residues 76 to 91 lie on the Extracellular side of the membrane; sequence VGSAYELFIHIISCYI. C89 and C170 are oxidised to a cystine. A helical transmembrane segment spans residues 92 to 112; sequence FCTVMALLSICSPVTLVAMCL. Over 113 to 135 the chain is Cytoplasmic; that stretch reads ERYVAICLPLRHASISSPKNTIN. Residues 136-156 form a helical membrane-spanning segment; that stretch reads GLLIIWGVSSVIPLFIFIVSF. At 157 to 190 the chain is on the extracellular side; the sequence is TYTPPNAMNSYVVCSNDVMFQVKWLAEMRALSQQ. Residues 191 to 211 form a helical membrane-spanning segment; the sequence is LLFVIMLCIVGSTYIKIMVAA. Topologically, residues 212 to 227 are cytoplasmic; sequence KSASAENKKSTYKGLR. A helical transmembrane segment spans residues 228–248; sequence TVILHGLQLILGMMQLITPYI. Over 249 to 267 the chain is Extracellular; the sequence is DILTLKVDIMLFINVKFSN. The chain crosses the membrane as a helical span at residues 268-285; sequence FMLFWIFPRCLSPLVYGL. Topologically, residues 286 to 325 are cytoplasmic; it reads RDKKFYNALKYYAFCGIYVCKKHKIKDSKTIRGAVSIAIY.

This sequence belongs to the G-protein coupled receptor 1 family. As to quaternary structure, homodimer. Monomer.

It localises to the cell membrane. Its subcellular location is the cytoplasm. In terms of biological role, probable olfactory receptor. The polypeptide is Odorant receptor 131-2 (Danio rerio (Zebrafish)).